The following is a 454-amino-acid chain: Cytochrome b-c1 complex subunit 2, mitochondrial (454 aa).

A mitochondrion-targeting transit peptide spans 1-35 (MISRSALSRGSQLALRRPAAAKTAQRGFAAAAASP).

This sequence belongs to the peptidase M16 family. UQCRC2/QCR2 subfamily. As to quaternary structure, component of the ubiquinol-cytochrome c oxidoreductase (cytochrome b-c1 complex, complex III, CIII), a multisubunit enzyme composed of 10 subunits. The complex is composed of 3 respiratory subunits cytochrome b (cob), cytochrome c1 (cyt-1) and Rieske protein (fes-1), 2 core protein subunits pep and ucr-1, and 5 low-molecular weight protein subunits qcr6, qcr7, qcr8, qcr9 and probably NCU16844/qcr10. The complex exists as an obligatory dimer and forms supercomplexes (SCs) in the inner mitochondrial membrane with NADH-ubiquinone oxidoreductase (complex I, CI) and cytochrome c oxidase (complex IV, CIV), resulting in different assemblies (supercomplexes SCI(1)III(2), SCIII(2)IV(1) and SCIII(2)IV(2) as well as higher order I(x)III(y)IV(z) megacomplexes).

Its subcellular location is the mitochondrion inner membrane. Component of the ubiquinol-cytochrome c oxidoreductase, a multisubunit transmembrane complex that is part of the mitochondrial electron transport chain which drives oxidative phosphorylation. The respiratory chain contains 3 multisubunit complexes succinate dehydrogenase (complex II, CII), ubiquinol-cytochrome c oxidoreductase (cytochrome b-c1 complex, complex III, CIII) and cytochrome c oxidase (complex IV, CIV), that cooperate to transfer electrons derived from NADH and succinate to molecular oxygen, creating an electrochemical gradient over the inner membrane that drives transmembrane transport and the ATP synthase. The cytochrome b-c1 complex catalyzes electron transfer from ubiquinol to cytochrome c, linking this redox reaction to translocation of protons across the mitochondrial inner membrane, with protons being carried across the membrane as hydrogens on the quinol. In the process called Q cycle, 2 protons are consumed from the matrix, 4 protons are released into the intermembrane space and 2 electrons are passed to cytochrome c. The sequence is that of Cytochrome b-c1 complex subunit 2, mitochondrial (ucr-1) from Neurospora crassa (strain ATCC 24698 / 74-OR23-1A / CBS 708.71 / DSM 1257 / FGSC 987).